The primary structure comprises 163 residues: Endoribonuclease YbeY (163 aa).

Residues His121, His125, and His131 each coordinate Zn(2+).

Belongs to the endoribonuclease YbeY family. Requires Zn(2+) as cofactor.

It localises to the cytoplasm. Functionally, single strand-specific metallo-endoribonuclease involved in late-stage 70S ribosome quality control and in maturation of the 3' terminus of the 16S rRNA. The polypeptide is Endoribonuclease YbeY (Synechococcus sp. (strain JA-3-3Ab) (Cyanobacteria bacterium Yellowstone A-Prime)).